Here is a 233-residue protein sequence, read N- to C-terminus: MADS-box protein CMB1 (233 aa).

In terms of domain architecture, MADS-box spans 3–58; the sequence is RGRVELKRIENKINRQVTFAKRRNGLLKKAYELSVLCDAEVALIVFSNRGKLYEFC. The region spanning 87–177 is the K-box domain; sequence TESSYQEYLK…KTKLEESCAS (91 aa).

It is found in the nucleus. In Dianthus caryophyllus (Carnation), this protein is MADS-box protein CMB1 (CMB1).